The sequence spans 164 residues: 4-hydroxy-4-methyl-2-oxoglutarate aldolase (164 aa).

Substrate is bound by residues 74–77 (GGNL) and R96. D97 serves as a coordination point for a divalent metal cation.

It belongs to the class II aldolase/RraA-like family. As to quaternary structure, homotrimer. The cofactor is Ni(2+). Co(2+) serves as cofactor. Requires Zn(2+) as cofactor.

The enzyme catalyses 4-hydroxy-4-methyl-2-oxoglutarate = 2 pyruvate. It catalyses the reaction oxaloacetate + H(+) = pyruvate + CO2. Its activity is regulated as follows. Competitively inhibited by oxalate, a pyruvate enolate analog. Functionally, catalyzes the aldol cleavage of 4-hydroxy-4-methyl-2-oxoglutarate (HMG) into 2 molecules of pyruvate. Also contains a secondary oxaloacetate (OAA) decarboxylase activity due to the common pyruvate enolate transition state formed following C-C bond cleavage in the retro-aldol and decarboxylation reactions. This is 4-hydroxy-4-methyl-2-oxoglutarate aldolase from Thermus thermophilus (strain ATCC 27634 / DSM 579 / HB8).